Consider the following 540-residue polypeptide: Lysosomal cobalamin transport escort protein LMBD1 (540 aa).

At 1 to 10 the chain is on the extracellular side; sequence MATPGAASAE. The helical transmembrane segment at 11 to 31 threads the bilayer; that stretch reads LVIGWCIFGLLLLAILAFCWI. Residues 32-50 lie on the Cytoplasmic side of the membrane; that stretch reads YVRKYQSRRESEVVSTITA. A helical membrane pass occupies residues 51–71; it reads IFSLAIALITSALLPVDIFLV. Topologically, residues 72-100 are extracellular; it reads SYMKNQNGTFKDWANANVSRQIEDTVLYG. Residues asparagine 78 and asparagine 88 are each glycosylated (N-linked (GlcNAc...) asparagine). The chain crosses the membrane as a helical span at residues 101-121; sequence YYTLYSVILFCVFFWIPFVYF. Residues 122–144 lie on the Cytoplasmic side of the membrane; the sequence is YYEEKDDDDTSKCTQIKTALKYT. A helical membrane pass occupies residues 145 to 165; sequence LGFVVICALLLLVGAFVPLNV. Residues 166–188 lie on the Extracellular side of the membrane; that stretch reads PNNKNSTEWEKVKFLFEELGSSH. An N-linked (GlcNAc...) asparagine glycan is attached at asparagine 170. The helical transmembrane segment at 189-209 threads the bilayer; the sequence is GLAALSFSISSLTLIGMLAAI. Topologically, residues 210–305 are cytoplasmic; the sequence is TYTAYGMSAL…KFCGALRPLK (96 aa). The YERL motif; mediates interaction with adapter protein complex 2 and is essential for its function in clathrin-mediated endocytosis of INSR motif lies at 232–235; the sequence is YERL. Threonine 238 carries the phosphothreonine modification. A WTKF motif; mediates interaction with adapter protein complex 2 and is essential for its function in clathrin-mediated endocytosis of INSR motif is present at residues 294–297; that stretch reads WTKF. Residues 306-326 traverse the membrane as a helical segment; sequence IIWGIFFILVALLFVISLFLS. The Extracellular segment spans residues 327-364; it reads NLDKALHSAGIDSGFIIFGANLSNPLNMLLPLLQTVFP. Residue asparagine 347 is glycosylated (N-linked (GlcNAc...) asparagine). The helical transmembrane segment at 365–385 threads the bilayer; sequence LDYILITIIIMYFIFTSMAGI. The Cytoplasmic portion of the chain corresponds to 386–408; that stretch reads RNIGIWFFWIRLYKIRRGRTRPQ. A helical transmembrane segment spans residues 409 to 429; that stretch reads ALLFLCMILLLIVLHTSYMIY. At 430 to 486 the chain is on the extracellular side; it reads SLAPQYVMYGSQNYLIETNITSDNHKGNSTLSVPKRCDADAPEDQCTVTRTYLFLHK. 2 N-linked (GlcNAc...) asparagine glycosylation sites follow: asparagine 448 and asparagine 457. Residues 487–507 form a helical membrane-spanning segment; it reads FWFFSAAYYFGNWAFLGVFLI. The Cytoplasmic portion of the chain corresponds to 508–540; it reads GLIVSCCKGKKSVIEGVDEDSDISDDEPSVYSV. A phosphoserine mark is found at serine 528 and serine 531.

It belongs to the LIMR family. LMBRD1 subfamily. As to quaternary structure, interacts with ABCD4; this interaction induces the translocation of ABCD4 from the endoplasmic reticulum to the lysosome. Interacts with ABCD4 and MMACHC; this interaction ensures the transport of cobalamin from the lysosome to the cytoplasm. Interacts with INSR, adapter protein complex 2 and clathrin heavy chain. Post-translationally, N-glycosylated.

It is found in the lysosome membrane. It localises to the cell membrane. The protein resides in the cytoplasmic vesicle. The protein localises to the clathrin-coated vesicle. In terms of biological role, lysosomal membrane chaperone required to export cobalamin (vitamin B12) from lysosome to the cytosol, allowing its conversion to cofactors. Targets ABCD4 transporter from the endoplasmic reticulum to the lysosomal membrane. Then forms a complex with lysosomal transporter ABCD4 and cytoplasmic MMACHC to transport cobalamin across the lysosomal membrane. Acts as an adapter protein which plays an important role in mediating and regulating the internalization of the insulin receptor (INSR). Involved in clathrin-mediated endocytosis of INSR via its interaction with adapter protein complex 2. Essential for the initiation of gastrulation and early formation of mesoderm structures during embryogenesis. In Macaca fascicularis (Crab-eating macaque), this protein is Lysosomal cobalamin transport escort protein LMBD1 (LMBRD1).